The chain runs to 187 residues: dTTP/UTP pyrophosphatase (187 aa).

The active-site Proton acceptor is Asp-64.

The protein belongs to the Maf family. YhdE subfamily. The cofactor is a divalent metal cation.

It is found in the cytoplasm. The enzyme catalyses dTTP + H2O = dTMP + diphosphate + H(+). It catalyses the reaction UTP + H2O = UMP + diphosphate + H(+). Nucleoside triphosphate pyrophosphatase that hydrolyzes dTTP and UTP. May have a dual role in cell division arrest and in preventing the incorporation of modified nucleotides into cellular nucleic acids. This is dTTP/UTP pyrophosphatase from Leptospira interrogans serogroup Icterohaemorrhagiae serovar Lai (strain 56601).